A 230-amino-acid chain; its full sequence is Cytidylate kinase (230 aa).

Residue 12–20 (GPSGAGKGT) coordinates ATP.

Belongs to the cytidylate kinase family. Type 1 subfamily.

The protein resides in the cytoplasm. The enzyme catalyses CMP + ATP = CDP + ADP. The catalysed reaction is dCMP + ATP = dCDP + ADP. This Shewanella piezotolerans (strain WP3 / JCM 13877) protein is Cytidylate kinase.